Here is a 60-residue protein sequence, read N- to C-terminus: Large ribosomal subunit protein bL32 (60 aa).

Residues 1–21 (MAVPARHTSKAKKNKRRTHYK) are disordered. Residues 7 to 20 (HTSKAKKNKRRTHY) show a composition bias toward basic residues.

The protein belongs to the bacterial ribosomal protein bL32 family.

In Streptococcus thermophilus (strain ATCC BAA-250 / LMG 18311), this protein is Large ribosomal subunit protein bL32.